The following is an 84-amino-acid chain: Large ribosomal subunit protein bL27 (84 aa).

Positions 1–21 (MAHKKGQGSTRNGRDSHSKRL) are disordered. Positions 12 to 21 (NGRDSHSKRL) are enriched in basic and acidic residues.

This sequence belongs to the bacterial ribosomal protein bL27 family.

The sequence is that of Large ribosomal subunit protein bL27 from Methylacidiphilum infernorum (isolate V4) (Methylokorus infernorum (strain V4)).